A 339-amino-acid chain; its full sequence is Large ribosomal subunit protein uL10 (339 aa).

Positions threonine 305 to glycine 339 are disordered. The segment covering lysine 312–alanine 330 has biased composition (acidic residues).

The protein belongs to the universal ribosomal protein uL10 family. As to quaternary structure, part of the 50S ribosomal subunit. Forms part of the ribosomal stalk which helps the ribosome interact with GTP-bound translation factors. Forms a heptameric L10(L12)2(L12)2(L12)2 complex, where L10 forms an elongated spine to which the L12 dimers bind in a sequential fashion.

In terms of biological role, forms part of the ribosomal stalk, playing a central role in the interaction of the ribosome with GTP-bound translation factors. The polypeptide is Large ribosomal subunit protein uL10 (Thermococcus onnurineus (strain NA1)).